The chain runs to 217 residues: LexA repressor (217 aa).

The H-T-H motif DNA-binding region spans 26–46 (FEEMKLALDLKSKSGIHRLIK). Residues S138 and K176 each act as for autocatalytic cleavage activity in the active site.

It belongs to the peptidase S24 family. As to quaternary structure, homodimer.

The enzyme catalyses Hydrolysis of Ala-|-Gly bond in repressor LexA.. Functionally, represses a number of genes involved in the response to DNA damage (SOS response), including recA and lexA. In the presence of single-stranded DNA, RecA interacts with LexA causing an autocatalytic cleavage which disrupts the DNA-binding part of LexA, leading to derepression of the SOS regulon and eventually DNA repair. The polypeptide is LexA repressor (Zymomonas mobilis subsp. mobilis (strain ATCC 31821 / ZM4 / CP4)).